The sequence spans 369 residues: Secondary metabolism regulator laeA (369 aa).

Residues 1–37 (MFGNGQTGQRLPAMASPPHDSYYSQSLASSRSRNNSD) are disordered. Positions 20–37 (DSYYSQSLASSRSRNNSD) are enriched in low complexity.

The protein belongs to the methyltransferase superfamily. LaeA methyltransferase family. In terms of assembly, component of the heterotrimeric velvet complex composed of laeA, veA and velB; VeA acting as a bridging protein between laeA and velB. Interacts directly with veA.

The protein localises to the nucleus. It carries out the reaction L-methionyl-[protein] + S-adenosyl-L-methionine = S-methyl-L-methionyl-[protein] + S-adenosyl-L-homocysteine. Methyltransferase that performs automethylation. No other methyl-accepting substrate has been identified yet. Component of the velvet transcription factor complex that acts as a global regulator for secondary metabolite gene expression. Required for aflR expression and subsequent aflatoxin production. Negatively regulates veA expression. Controls conidiophore and conidial development. Required for hydrophobin production which plays a role in cell surface hydrophobicity and host defense escape. The polypeptide is Secondary metabolism regulator laeA (Aspergillus flavus (strain ATCC 200026 / FGSC A1120 / IAM 13836 / NRRL 3357 / JCM 12722 / SRRC 167)).